The sequence spans 225 residues: LHFPL tetraspan subfamily member 2a protein (225 aa).

4 helical membrane-spanning segments follow: residues 11–31 (MLWTLLSIVAAFSELIAFLST), 99–119 (IFLAAGILLLCAVAFISIFTM), 129–149 (IFNVCGLLQAIAGLFLIVGLV), and 178–198 (AGWAFYTALAGTVLCFLCAVF).

This sequence belongs to the LHFP family.

The protein resides in the membrane. Its function is as follows. Plays a role in fertility. Involved in distal reproductive tract development. This Danio rerio (Zebrafish) protein is LHFPL tetraspan subfamily member 2a protein.